Here is a 223-residue protein sequence, read N- to C-terminus: Phage shock protein A homolog (223 aa).

Residues 29 to 185 (IDQALRDMRS…AGMEDRNKAM (157 aa)) adopt a coiled-coil conformation.

Belongs to the PspA/Vipp/IM30 family.

In Deinococcus radiodurans (strain ATCC 13939 / DSM 20539 / JCM 16871 / CCUG 27074 / LMG 4051 / NBRC 15346 / NCIMB 9279 / VKM B-1422 / R1), this protein is Phage shock protein A homolog.